Consider the following 304-residue polypeptide: Aspartate carbamoyltransferase catalytic subunit (304 aa).

Carbamoyl phosphate-binding residues include arginine 57 and threonine 58. Lysine 85 contacts L-aspartate. 3 residues coordinate carbamoyl phosphate: arginine 107, histidine 134, and glutamine 137. Residues arginine 167 and arginine 216 each coordinate L-aspartate. Positions 260 and 261 each coordinate carbamoyl phosphate.

This sequence belongs to the aspartate/ornithine carbamoyltransferase superfamily. ATCase family. Heterododecamer (2C3:3R2) of six catalytic PyrB chains organized as two trimers (C3), and six regulatory PyrI chains organized as three dimers (R2).

It catalyses the reaction carbamoyl phosphate + L-aspartate = N-carbamoyl-L-aspartate + phosphate + H(+). The protein operates within pyrimidine metabolism; UMP biosynthesis via de novo pathway; (S)-dihydroorotate from bicarbonate: step 2/3. In terms of biological role, catalyzes the condensation of carbamoyl phosphate and aspartate to form carbamoyl aspartate and inorganic phosphate, the committed step in the de novo pyrimidine nucleotide biosynthesis pathway. The sequence is that of Aspartate carbamoyltransferase catalytic subunit from Fusobacterium nucleatum subsp. nucleatum (strain ATCC 25586 / DSM 15643 / BCRC 10681 / CIP 101130 / JCM 8532 / KCTC 2640 / LMG 13131 / VPI 4355).